The primary structure comprises 235 residues: Rab-like protein 3 (235 aa).

The tract at residues 1–235 is small GTPase-like; it reads MASLDRVKVL…GGNFKSLHYD (235 aa). GTP contacts are provided by residues 16-21, 148-150, and 179-180; these read GVGKSS, KLD, and DC.

The protein belongs to the small GTPase superfamily. Rab family. As to quaternary structure, homodimer.

Its function is as follows. Required for KRAS signaling regulation and modulation of cell proliferation. Regulator of KRAS prenylation, and probably prenylation of other small GTPases. Required for lymphocyte development and function. Not required for myeloid cell development. This is Rab-like protein 3 (rabl3) from Xenopus tropicalis (Western clawed frog).